Consider the following 416-residue polypeptide: D-amino acid dehydrogenase (416 aa).

Residue 3-17 (ITILGSGVIGVTTAY) coordinates FAD.

It belongs to the DadA oxidoreductase family. FAD is required as a cofactor.

It catalyses the reaction a D-alpha-amino acid + A + H2O = a 2-oxocarboxylate + AH2 + NH4(+). Functionally, oxidative deamination of D-amino acids. This chain is D-amino acid dehydrogenase, found in Brucella suis biovar 1 (strain 1330).